Consider the following 215-residue polypeptide: 3-isopropylmalate dehydratase small subunit (215 aa).

It belongs to the LeuD family. LeuD type 1 subfamily. Heterodimer of LeuC and LeuD.

The catalysed reaction is (2R,3S)-3-isopropylmalate = (2S)-2-isopropylmalate. The protein operates within amino-acid biosynthesis; L-leucine biosynthesis; L-leucine from 3-methyl-2-oxobutanoate: step 2/4. Its function is as follows. Catalyzes the isomerization between 2-isopropylmalate and 3-isopropylmalate, via the formation of 2-isopropylmaleate. The polypeptide is 3-isopropylmalate dehydratase small subunit (Leptothrix cholodnii (strain ATCC 51168 / LMG 8142 / SP-6) (Leptothrix discophora (strain SP-6))).